Here is an 846-residue protein sequence, read N- to C-terminus: Translation initiation factor IF-2 (846 aa).

Residues 198-219 (YKREEEEKKSKAKKAGGKGFKK) are disordered. Residues 207–219 (SKAKKAGGKGFKK) are compositionally biased toward basic residues. Positions 345–512 (SRAPVVTIMG…AVLLQSEVLE (168 aa)) constitute a tr-type G domain. A G1 region spans residues 354-361 (GHVDHGKT). Position 354 to 361 (354 to 361 (GHVDHGKT)) interacts with GTP. A G2 region spans residues 379–383 (GITQH). The tract at residues 400–403 (DTPG) is G3. Residues 400–404 (DTPGH) and 454–457 (NKID) each bind GTP. Positions 454-457 (NKID) are G4. Residues 490–492 (SAK) are G5.

This sequence belongs to the TRAFAC class translation factor GTPase superfamily. Classic translation factor GTPase family. IF-2 subfamily.

Its subcellular location is the cytoplasm. One of the essential components for the initiation of protein synthesis. Protects formylmethionyl-tRNA from spontaneous hydrolysis and promotes its binding to the 30S ribosomal subunits. Also involved in the hydrolysis of GTP during the formation of the 70S ribosomal complex. The sequence is that of Translation initiation factor IF-2 from Francisella tularensis subsp. holarctica (strain OSU18).